Consider the following 585-residue polypeptide: Pyruvate kinase (585 aa).

Position 32 (Arg-32) interacts with substrate. K(+) contacts are provided by Asn-34, Ser-36, Asp-66, and Thr-67. Position 34–37 (34–37) interacts with ATP; that stretch reads NFSH. Residues Arg-73 and Lys-156 each contribute to the ATP site. Glu-221 provides a ligand contact to Mg(2+). Residues Gly-244, Asp-245, and Thr-277 each coordinate substrate. Residue Asp-245 coordinates Mg(2+).

Belongs to the pyruvate kinase family. It in the C-terminal section; belongs to the PEP-utilizing enzyme family. Mg(2+) serves as cofactor. K(+) is required as a cofactor.

The enzyme catalyses pyruvate + ATP = phosphoenolpyruvate + ADP + H(+). The protein operates within carbohydrate degradation; glycolysis; pyruvate from D-glyceraldehyde 3-phosphate: step 5/5. In Staphylococcus aureus (strain USA300), this protein is Pyruvate kinase (pyk).